A 286-amino-acid polypeptide reads, in one-letter code: Bark leucoagglutinin (286 aa).

Residues 1-28 (ATSNSKPTQVLLATFLTFFFLLLNNVNS) form the signal peptide. Residue Tyr-73 coordinates N-acetyl-alpha-neuraminyl-(2-&gt;3)-beta-D-galactosyl-(1-&gt;4)-beta-D-glucose. N-linked (GlcNAc...) asparagine glycosylation is present at Asn-89. Asp-115 and Lys-135 together coordinate N-acetyl-alpha-neuraminyl-(2-&gt;3)-beta-D-galactosyl-(1-&gt;4)-beta-D-glucose. N-linked (GlcNAc...) asparagine glycosylation occurs at Asn-141. Residues Glu-155 and Asp-157 each contribute to the Mn(2+) site. Residues Asp-157, Tyr-159, Asp-165, and Asp-168 each coordinate Ca(2+). Residues Tyr-159 and Asp-165 each coordinate N-acetyl-alpha-neuraminyl-(2-&gt;3)-beta-D-galactosyl-(1-&gt;4)-beta-D-glucose. The Mn(2+) site is built by Asp-168 and His-173. N-linked (GlcNAc...) asparagine glycosylation is found at Asn-207 and Asn-219. A propeptide spans 278–286 (NVHIARYTA) (removed in mature form).

The protein belongs to the leguminous lectin family.

Sialic acid-binding lectin specifically recognizing the trisaccharide sequence Neu5Ac/Gc-alpha-2,3-Gal-beta-1,4-GlcNAc/Glc. This Maackia amurensis (Amur maackia) protein is Bark leucoagglutinin.